The primary structure comprises 601 residues: Potassium-transporting ATPase potassium-binding subunit (601 aa).

12 helical membrane-spanning segments follow: residues 6-26 (IMLLVAFLGVLLALAYPLGLF), 65-85 (SYAIALLVFNTLGALFVYAVQ), 136-156 (ALTGQNFFSAATGIAVAFALI), 179-199 (LYILLPLAIVVSVALMGQGVI), 283-303 (FSNFIEMLAIFLIPAGLCFTF), 313-333 (GWAVLGAMTLIFVVMTSIVMT), 367-387 (FGISASALFTAVTTAASCGAV), 397-417 (MGGFVPLVLMQFGEVVFGGVG), 419-439 (GLYGMLIFAILSVFIAGLMIG), 458-478 (SIAILVTPTLVLVGTAIAVLV), 524-544 (MLAIAMWFGRFAMIVPILAIA), and 566-586 (LFVALLVGVVVLVGVLNYVPA).

The protein belongs to the KdpA family. The system is composed of three essential subunits: KdpA, KdpB and KdpC.

The protein localises to the cell inner membrane. In terms of biological role, part of the high-affinity ATP-driven potassium transport (or Kdp) system, which catalyzes the hydrolysis of ATP coupled with the electrogenic transport of potassium into the cytoplasm. This subunit binds the periplasmic potassium ions and delivers the ions to the membrane domain of KdpB through an intramembrane tunnel. The polypeptide is Potassium-transporting ATPase potassium-binding subunit (Herminiimonas arsenicoxydans).